A 357-amino-acid chain; its full sequence is UPF0283 membrane protein BCAN_A1047 (357 aa).

The disordered stretch occupies residues 1–36; the sequence is MSDKTPRKPTAFRLEQPARVSAASEQEEPRRPRAVK. The span at 27–36 shows a compositional bias: basic and acidic residues; sequence EEPRRPRAVK. Transmembrane regions (helical) follow at residues 78-98 and 109-129; these read ILFG…TEDL and LGWT…AIIL.

This sequence belongs to the UPF0283 family.

The protein resides in the cell inner membrane. This chain is UPF0283 membrane protein BCAN_A1047, found in Brucella canis (strain ATCC 23365 / NCTC 10854 / RM-666).